A 197-amino-acid chain; its full sequence is Phosphoheptose isomerase (197 aa).

Residues 36-197 (LVHSLAQGGK…VDSLLLGVEE (162 aa)) form the SIS domain. 51–53 (NGG) is a substrate binding site. His60 and Glu64 together coordinate Zn(2+). Substrate contacts are provided by residues Glu64, 93 to 94 (ND), 119 to 121 (STS), Ser124, and Gln174. The Zn(2+) site is built by Gln174 and His182.

It belongs to the SIS family. GmhA subfamily. Homotetramer. Zn(2+) is required as a cofactor.

The protein resides in the cytoplasm. It carries out the reaction 2 D-sedoheptulose 7-phosphate = D-glycero-alpha-D-manno-heptose 7-phosphate + D-glycero-beta-D-manno-heptose 7-phosphate. It participates in carbohydrate biosynthesis; D-glycero-D-manno-heptose 7-phosphate biosynthesis; D-glycero-alpha-D-manno-heptose 7-phosphate and D-glycero-beta-D-manno-heptose 7-phosphate from sedoheptulose 7-phosphate: step 1/1. Catalyzes the isomerization of sedoheptulose 7-phosphate in D-glycero-D-manno-heptose 7-phosphate. This chain is Phosphoheptose isomerase, found in Thiobacillus denitrificans (strain ATCC 25259 / T1).